The primary structure comprises 376 residues: Alcohol dehydrogenase class-3 (376 aa).

Positions 47, 69, 99, 102, 105, 113, and 176 each coordinate Zn(2+).

The protein belongs to the zinc-containing alcohol dehydrogenase family. Class-III subfamily. In terms of assembly, homodimer. The cofactor is Zn(2+). Expressed in the skeletal muscle, heart, gill filaments and liver, with highest levels in the kidney.

Its subcellular location is the cytoplasm. It carries out the reaction a primary alcohol + NAD(+) = an aldehyde + NADH + H(+). The enzyme catalyses a secondary alcohol + NAD(+) = a ketone + NADH + H(+). It catalyses the reaction S-(hydroxymethyl)glutathione + NADP(+) = S-formylglutathione + NADPH + H(+). The catalysed reaction is S-(hydroxymethyl)glutathione + NAD(+) = S-formylglutathione + NADH + H(+). It carries out the reaction S-nitrosoglutathione + NADH + H(+) = S-(hydroxysulfenamide)glutathione + NAD(+). Class-III ADH is remarkably ineffective in oxidizing ethanol, but it readily catalyzes the oxidation of long-chain primary alcohols and the oxidation of S-(hydroxymethyl) glutathione. Also acts as a S-nitroso-glutathione reductase by catalyzing the NADH-dependent reduction of S-nitrosoglutathione, thereby regulating protein S-nitrosylation. The polypeptide is Alcohol dehydrogenase class-3 (Sparus aurata (Gilthead sea bream)).